The following is a 355-amino-acid chain: Heat-inducible transcription repressor HrcA (355 aa).

This sequence belongs to the HrcA family.

In terms of biological role, negative regulator of class I heat shock genes (grpE-dnaK-dnaJ and groELS operons). Prevents heat-shock induction of these operons. This chain is Heat-inducible transcription repressor HrcA, found in Nitratidesulfovibrio vulgaris (strain DP4) (Desulfovibrio vulgaris).